The following is a 146-amino-acid chain: Large ribosomal subunit protein uL15 (146 aa).

Residues 1 to 13 (MKLHELRPAEGSR) show a composition bias toward basic and acidic residues. Positions 1–55 (MKLHELRPAEGSRKSPKRVGRGTGSGLGKTSARGENGQNSRSGGGVRPGFEGGQM) are disordered. The segment covering 42-52 (SGGGVRPGFEG) has biased composition (gly residues).

This sequence belongs to the universal ribosomal protein uL15 family. As to quaternary structure, part of the 50S ribosomal subunit.

Its function is as follows. Binds to the 23S rRNA. In Clostridium tetani (strain Massachusetts / E88), this protein is Large ribosomal subunit protein uL15.